Here is an 877-residue protein sequence, read N- to C-terminus: Leucine--tRNA ligase (877 aa).

The 'HIGH' region signature appears at 50–60 (PYPSGKLHMGH). Positions 634-638 (KMSKS) match the 'KMSKS' region motif. An ATP-binding site is contributed by Lys637.

Belongs to the class-I aminoacyl-tRNA synthetase family.

Its subcellular location is the cytoplasm. The catalysed reaction is tRNA(Leu) + L-leucine + ATP = L-leucyl-tRNA(Leu) + AMP + diphosphate. This is Leucine--tRNA ligase from Hydrogenovibrio crunogenus (strain DSM 25203 / XCL-2) (Thiomicrospira crunogena).